The chain runs to 341 residues: Endolytic peptidoglycan transglycosylase RlpA (341 aa).

Positions Met1–Ser26 are cleaved as a signal peptide. A lipid anchor (N-palmitoyl cysteine) is attached at Cys27. The S-diacylglycerol cysteine moiety is linked to residue Cys27. The region spanning Ser260–Asp341 is the SPOR domain.

The protein belongs to the RlpA family.

Its subcellular location is the cell membrane. Functionally, lytic transglycosylase with a strong preference for naked glycan strands that lack stem peptides. Required for efficient separation of daughter cells and maintenance of rod shape. The polypeptide is Endolytic peptidoglycan transglycosylase RlpA (Pseudomonas aeruginosa (strain UCBPP-PA14)).